Reading from the N-terminus, the 98-residue chain is NADH-ubiquinone oxidoreductase chain 4L (98 aa).

3 consecutive transmembrane segments (helical) span residues 1 to 21 (MPIIYMNIMLAFTISLLGMLT), 29 to 49 (SLLCLEGMMLSLFIMSTLMAL), and 58 to 78 (IVPIALLVFAACEAAVGLSLL).

This sequence belongs to the complex I subunit 4L family. Core subunit of respiratory chain NADH dehydrogenase (Complex I) which is composed of 45 different subunits.

Its subcellular location is the mitochondrion inner membrane. It catalyses the reaction a ubiquinone + NADH + 5 H(+)(in) = a ubiquinol + NAD(+) + 4 H(+)(out). Core subunit of the mitochondrial membrane respiratory chain NADH dehydrogenase (Complex I) which catalyzes electron transfer from NADH through the respiratory chain, using ubiquinone as an electron acceptor. Part of the enzyme membrane arm which is embedded in the lipid bilayer and involved in proton translocation. This chain is NADH-ubiquinone oxidoreductase chain 4L (MT-ND4L), found in Presbytis melalophos (Mitred leaf monkey).